The sequence spans 215 residues: Interleukin-12 subunit alpha (215 aa).

A signal peptide spans 1 to 22 (MCSSRCLLFLATLAFLIHLSLA). Intrachain disulfides connect Cys-33-Cys-106, Cys-60-Cys-192, and Cys-81-Cys-119. The N-linked (GlcNAc...) asparagine glycan is linked to Asn-89.

The protein belongs to the IL-6 superfamily. Heterodimer with IL12B; disulfide-linked. This heterodimer is known as interleukin IL-12. Heterodimer with EBI3/IL27B; not disulfide-linked. This heterodimer is known as interleukin IL-35. Interacts with NBR1; this interaction promotes IL-12 secretion.

Its subcellular location is the secreted. Heterodimerizes with IL12B to form the IL-12 cytokine or with EBI3/IL27B to form the IL-35 cytokine. IL-12 is primarily produced by professional antigen-presenting cells (APCs) such as B-cells and dendritic cells (DCs) as well as macrophages and granulocytes and regulates T-cell and natural killer-cell responses, induces the production of interferon-gamma (IFN-gamma), favors the differentiation of T-helper 1 (Th1) cells and is an important link between innate resistance and adaptive immunity. Mechanistically, exerts its biological effects through a receptor composed of IL12R1 and IL12R2 subunits. Binding to the receptor results in the rapid tyrosine phosphorylation of a number of cellular substrates including the JAK family kinases TYK2 and JAK2. In turn, recruited STAT4 gets phosphorylated and translocates to the nucleus where it regulates cytokine/growth factor responsive genes. As part of IL-35, plays essential roles in maintaining the immune homeostasis of the liver microenvironment and also functions as an immune-suppressive cytokine. Mediates biological events through unconventional receptors composed of IL12RB2 and gp130/IL6ST heterodimers or homodimers. Signaling requires the transcription factors STAT1 and STAT4, which form a unique heterodimer that binds to distinct DNA sites. This is Interleukin-12 subunit alpha (IL12A) from Sigmodon hispidus (Hispid cotton rat).